A 157-amino-acid polypeptide reads, in one-letter code: Transcription initiation factor IIA large subunit (157 aa).

The protein belongs to the TFIIA subunit 1 family. TFIIA is a heterodimer of the large subunit and the small subunit gamma.

Its subcellular location is the nucleus. TFIIA is a component of the transcription machinery of RNA polymerase II and plays an important role in transcriptional activation. This is Transcription initiation factor IIA large subunit (TOA1) from Encephalitozoon cuniculi (strain GB-M1) (Microsporidian parasite).